The primary structure comprises 156 residues: Large ribosomal subunit protein eL24 (156 aa).

Positions 87 to 156 (LELIKERRSQ…AFQKVHATSR (70 aa)) are disordered. The span at 89–129 (LIKERRSQKPSDRKAARDVKLAKDKEAKKADKAARKAEKAK) shows a compositional bias: basic and acidic residues. Over residues 130 to 147 (SAAAGAQSKVSKQQSKGA) the composition is skewed to low complexity.

It belongs to the eukaryotic ribosomal protein eL24 family.

The sequence is that of Large ribosomal subunit protein eL24 (RPL24) from Debaryomyces hansenii (strain ATCC 36239 / CBS 767 / BCRC 21394 / JCM 1990 / NBRC 0083 / IGC 2968) (Yeast).